Consider the following 90-residue polypeptide: Probable Fe(2+)-trafficking protein (90 aa).

It belongs to the Fe(2+)-trafficking protein family.

Its function is as follows. Could be a mediator in iron transactions between iron acquisition and iron-requiring processes, such as synthesis and/or repair of Fe-S clusters in biosynthetic enzymes. The protein is Probable Fe(2+)-trafficking protein of Pseudomonas fluorescens (strain Pf0-1).